We begin with the raw amino-acid sequence, 360 residues long: Nicotinate-nucleotide--dimethylbenzimidazole phosphoribosyltransferase (360 aa).

The Proton acceptor role is filled by Glu327.

It belongs to the CobT family.

It carries out the reaction 5,6-dimethylbenzimidazole + nicotinate beta-D-ribonucleotide = alpha-ribazole 5'-phosphate + nicotinate + H(+). Its pathway is nucleoside biosynthesis; alpha-ribazole biosynthesis; alpha-ribazole from 5,6-dimethylbenzimidazole: step 1/2. Catalyzes the synthesis of alpha-ribazole-5'-phosphate from nicotinate mononucleotide (NAMN) and 5,6-dimethylbenzimidazole (DMB). The sequence is that of Nicotinate-nucleotide--dimethylbenzimidazole phosphoribosyltransferase from Shewanella baltica (strain OS185).